The primary structure comprises 291 residues: Beta-lactamase CTX-M-14 (291 aa).

The signal sequence occupies residues 1-28; the sequence is MVTKRVQRMMFAAAACIPLLLGSAPLYA. Residue S73 is the Nucleophile; acyl-ester intermediate of the active site. A beta-lactam contacts are provided by K76, S133, E169, and S240.

The protein belongs to the class-A beta-lactamase family. In terms of assembly, monomer.

It is found in the secreted. It catalyses the reaction a beta-lactam + H2O = a substituted beta-amino acid. Its activity is regulated as follows. Inhibited by the beta-lactamase-blocking agents clavulanic acid, tazobactam and sulbactam. In terms of biological role, extended-spectrum beta-lactamase (ESBL) which confers resistance to penicillins, as well as first, second, and third-generation cephalosporins. Has cefotaxime-hydrolyzing activity. The sequence is that of Beta-lactamase CTX-M-14 from Escherichia coli.